A 253-amino-acid chain; its full sequence is Thiamine import ATP-binding protein ThiQ (253 aa).

Residues 8–236 (VRLDKVSFSY…AGPEAFRRYI (229 aa)) enclose the ABC transporter domain. 38 to 45 (GPSGSGKS) provides a ligand contact to ATP.

This sequence belongs to the ABC transporter superfamily. Thiamine importer (TC 3.A.1.19.1) family. The complex is composed of two ATP-binding proteins (ThiQ), two transmembrane proteins (ThiP) and a solute-binding protein (ThiB).

It is found in the cell inner membrane. It carries out the reaction thiamine(out) + ATP + H2O = thiamine(in) + ADP + phosphate + H(+). Its function is as follows. Part of the ABC transporter complex ThiBPQ involved in thiamine import. Responsible for energy coupling to the transport system. The chain is Thiamine import ATP-binding protein ThiQ from Mesorhizobium japonicum (strain LMG 29417 / CECT 9101 / MAFF 303099) (Mesorhizobium loti (strain MAFF 303099)).